The chain runs to 430 residues: Tol-Pal system protein TolB (430 aa).

Positions 1–21 (MKQALRVAFGFLILWASVLHA) are cleaved as a signal peptide.

This sequence belongs to the TolB family. In terms of assembly, the Tol-Pal system is composed of five core proteins: the inner membrane proteins TolA, TolQ and TolR, the periplasmic protein TolB and the outer membrane protein Pal. They form a network linking the inner and outer membranes and the peptidoglycan layer.

Its subcellular location is the periplasm. Functionally, part of the Tol-Pal system, which plays a role in outer membrane invagination during cell division and is important for maintaining outer membrane integrity. TolB occupies a key intermediary position in the Tol-Pal system because it communicates directly with both membrane-embedded components, Pal in the outer membrane and TolA in the inner membrane. The protein is Tol-Pal system protein TolB of Shigella dysenteriae serotype 1 (strain Sd197).